A 638-amino-acid polypeptide reads, in one-letter code: MAKTRLTVDTNDLASRITRAPFPGSAKIYIEGSRPDIRVPFREVTLTDTMVHEGAGEPRREANPPLRLYDASGVYTDPASPIDITRGLPPLRGAWINERADTEALPGISSAYGRERLNDPALAALRMAHAPVPRRAKAGANVSQMHYARKGIITPEMEYIAVRENLVRAQLAERLATERMPKKGHSFNASIPEQITAEFVRDEVARGRAVIPNNINHPESEPMIIGRNFLIKVNANIGNSAVTSSIEEEVDKLVWSIRWGADTVMDLSTGENIHETREWILRNSPVPIGTVPIYQALEKVNGKAEDLTWEIFRDTLIEQAEQGVDYFTIHAGVRLAYVPLTANRLTGIVSRGGSIMAKWCLSHHKESFLYERFDEICEIMKAYDVCFSLGDGLRPGSIADANDEAQFAELHTLGELTQIAWKHDVQVMIEGPGHVPLQLVKENVDKQLEACFEAPFYTLGPLITDISPGYDHISSAMGAANIGWYGTAMLCYVTPKEHLGLPNRDDVKQGLIAYKIAAHAGDLAKGYPGAQMWDNAVSKARFEFRWEDQFRLAIDPDTAMAYHDETLPKENAKVAHFCSMCGPKFCSMKISQEVREFARLNPASTTLAAPGVIAIKQIDSGFEEKAKEFREGGSEIYS.

Substrate is bound by residues N236, M265, Y294, H330, 350-352 (SRG), 391-394 (DGLR), and E430. H434 is a Zn(2+) binding site. Position 457 (Y457) interacts with substrate. Residue H498 coordinates Zn(2+). [4Fe-4S] cluster contacts are provided by C578, C581, and C586.

It belongs to the ThiC family. As to quaternary structure, homodimer. It depends on [4Fe-4S] cluster as a cofactor.

The catalysed reaction is 5-amino-1-(5-phospho-beta-D-ribosyl)imidazole + S-adenosyl-L-methionine = 4-amino-2-methyl-5-(phosphooxymethyl)pyrimidine + CO + 5'-deoxyadenosine + formate + L-methionine + 3 H(+). Its pathway is cofactor biosynthesis; thiamine diphosphate biosynthesis. In terms of biological role, catalyzes the synthesis of the hydroxymethylpyrimidine phosphate (HMP-P) moiety of thiamine from aminoimidazole ribotide (AIR) in a radical S-adenosyl-L-methionine (SAM)-dependent reaction. This chain is Phosphomethylpyrimidine synthase, found in Polaromonas sp. (strain JS666 / ATCC BAA-500).